Consider the following 468-residue polypeptide: 6-phosphogluconate dehydrogenase, decarboxylating (468 aa).

Residues 9-14 (GLAVMG), 32-34 (NRS), 73-75 (VQA), and N101 contribute to the NADP(+) site. Substrate is bound by residues N101 and 127–129 (SGG). K182 acts as the Proton acceptor in catalysis. 185–186 (HN) is a binding site for substrate. E189 functions as the Proton donor in the catalytic mechanism. Substrate contacts are provided by Y190, K259, R286, R444, and H450.

It belongs to the 6-phosphogluconate dehydrogenase family. As to quaternary structure, homodimer.

It carries out the reaction 6-phospho-D-gluconate + NADP(+) = D-ribulose 5-phosphate + CO2 + NADPH. The protein operates within carbohydrate degradation; pentose phosphate pathway; D-ribulose 5-phosphate from D-glucose 6-phosphate (oxidative stage): step 3/3. In terms of biological role, catalyzes the oxidative decarboxylation of 6-phosphogluconate to ribulose 5-phosphate and CO(2), with concomitant reduction of NADP to NADPH. The polypeptide is 6-phosphogluconate dehydrogenase, decarboxylating (gnd) (Staphylococcus aureus (strain Mu50 / ATCC 700699)).